The primary structure comprises 201 residues: Recombination protein RecR (201 aa).

The C4-type zinc-finger motif lies at 60-75 (CKYCQSLTEKDVCDIC). One can recognise a Toprim domain in the interval 83 to 177 (SKLCIIESML…KISRIGFGVP (95 aa)).

This sequence belongs to the RecR family.

Functionally, may play a role in DNA repair. It seems to be involved in an RecBC-independent recombinational process of DNA repair. It may act with RecF and RecO. In Francisella philomiragia subsp. philomiragia (strain ATCC 25017 / CCUG 19701 / FSC 153 / O#319-036), this protein is Recombination protein RecR.